The following is a 180-amino-acid chain: Large ribosomal subunit protein uL6 (180 aa).

The protein belongs to the universal ribosomal protein uL6 family. In terms of assembly, part of the 50S ribosomal subunit.

This protein binds to the 23S rRNA, and is important in its secondary structure. It is located near the subunit interface in the base of the L7/L12 stalk, and near the tRNA binding site of the peptidyltransferase center. The sequence is that of Large ribosomal subunit protein uL6 from Anaeromyxobacter dehalogenans (strain 2CP-C).